A 379-amino-acid polypeptide reads, in one-letter code: Carboxypeptidase Y-deficient protein 8 (379 aa).

A compositionally biased stretch (low complexity) spans His-84–Val-107. The tract at residues His-84–Asp-108 is disordered. Ser-216 is modified (phosphoserine).

Belongs to the VPS26 family. Component of the retromer complex which consists of VPS29, VPS26, VPS35, VPS5 and VPS17. Component of a retromer subcomplex consisting of VPS29, VPS26 and VPS35.

Its function is as follows. Plays a role in vesicular protein sorting. Required for the endosome-to-Golgi retrieval of the vacuolar protein sorting receptor VPS10. Component of the membrane-associated retromer complex which is essential in endosome-to-Golgi retrograde transport. The VPS29-VPS26-VPS35 subcomplex may be involved in cargo selection. In Saccharomyces cerevisiae (strain ATCC 204508 / S288c) (Baker's yeast), this protein is Carboxypeptidase Y-deficient protein 8 (PEP8).